Here is an 881-residue protein sequence, read N- to C-terminus: Valine--tRNA ligase (881 aa).

The short motif at 48–58 (PNITGKLHLGH) is the 'HIGH' region element. The 'KMSKS' region signature appears at 527-531 (KMSKS). Residue K530 coordinates ATP. 2 coiled-coil regions span residues 721-747 (KNETSENAMNQIIEAIKSIRNVRAEMN) and 811-881 (LLDL…AALK).

This sequence belongs to the class-I aminoacyl-tRNA synthetase family. ValS type 1 subfamily. Monomer.

The protein resides in the cytoplasm. The enzyme catalyses tRNA(Val) + L-valine + ATP = L-valyl-tRNA(Val) + AMP + diphosphate. Its function is as follows. Catalyzes the attachment of valine to tRNA(Val). As ValRS can inadvertently accommodate and process structurally similar amino acids such as threonine, to avoid such errors, it has a 'posttransfer' editing activity that hydrolyzes mischarged Thr-tRNA(Val) in a tRNA-dependent manner. The polypeptide is Valine--tRNA ligase (Clostridium acetobutylicum (strain ATCC 824 / DSM 792 / JCM 1419 / IAM 19013 / LMG 5710 / NBRC 13948 / NRRL B-527 / VKM B-1787 / 2291 / W)).